The primary structure comprises 49 residues: Small, acid-soluble spore protein K (49 aa).

The segment at 1-49 (MRNKAKGFPNQVNHKFEGEPGATDAYASKRPNGETNTRPQERMRASGKR) is disordered. Residues 39–49 (PQERMRASGKR) show a composition bias toward basic and acidic residues.

The protein belongs to the SspK family.

The protein localises to the spore core. This chain is Small, acid-soluble spore protein K, found in Bacillus pumilus (strain SAFR-032).